Consider the following 526-residue polypeptide: GMP synthase [glutamine-hydrolyzing] (526 aa).

Residues 10-208 enclose the Glutamine amidotransferase type-1 domain; it reads RILILDFGSQ…VVDLCGCEKL (199 aa). The active-site Nucleophile is cysteine 87. Active-site residues include histidine 182 and glutamate 184. Residues 209-401 form the GMPS ATP-PPase domain; sequence WTTENIIDDS…LGLPSDMVYR (193 aa). 236–242 lines the ATP pocket; it reads SGGVDSS.

Homodimer.

It carries out the reaction XMP + L-glutamine + ATP + H2O = GMP + L-glutamate + AMP + diphosphate + 2 H(+). It functions in the pathway purine metabolism; GMP biosynthesis; GMP from XMP (L-Gln route): step 1/1. Functionally, catalyzes the synthesis of GMP from XMP. This is GMP synthase [glutamine-hydrolyzing] from Hydrogenovibrio crunogenus (strain DSM 25203 / XCL-2) (Thiomicrospira crunogena).